A 278-amino-acid chain; its full sequence is HTH-type transcriptional regulator HdfR (278 aa).

The region spanning 1–58 (MDTELLKTFLEVSRTRHFGRAAEALYLTQSAVSFRIRQLENQLGVNLFTRHRNNIRLT) is the HTH lysR-type domain. Positions 18–37 (FGRAAEALYLTQSAVSFRIR) form a DNA-binding region, H-T-H motif.

This sequence belongs to the LysR transcriptional regulatory family.

In terms of biological role, negatively regulates the transcription of the flagellar master operon flhDC by binding to the upstream region of the operon. The protein is HTH-type transcriptional regulator HdfR of Salmonella schwarzengrund (strain CVM19633).